The chain runs to 43 residues: Mu-conotoxin-like Cal 12.2c (43 aa).

Arg1 is a propeptide. 4 disulfides stabilise this stretch: Cys4/Cys16, Cys11/Cys24, Cys18/Cys29, and Cys23/Cys35. Trp31 is subject to 6'-bromotryptophan. Position 36 is a 4-hydroxyproline (Pro36). Trp40 carries the post-translational modification 6'-bromotryptophan.

In terms of tissue distribution, expressed by the venom duct.

The protein resides in the secreted. In terms of biological role, mu-conotoxins block voltage-gated sodium channels. This toxin reversibly blocks voltage-gated sodium channel in cephalopods, with no alteration in the voltage dependence of sodium conductance or on the kinetics of inactivation. This Californiconus californicus (California cone) protein is Mu-conotoxin-like Cal 12.2c.